A 317-amino-acid chain; its full sequence is D-alanine--D-alanine ligase (317 aa).

The 200-residue stretch at 104-303 (KRVWLQHGLP…YAELCVAILA (200 aa)) folds into the ATP-grasp domain. An ATP-binding site is contributed by 130 to 185 (PDRLGLPLILKPPHEGSTVGITKVAACADMEQAYAAASHFDEVVLAEQFVRGRELT). Positions 257, 270, and 272 each coordinate Mg(2+).

This sequence belongs to the D-alanine--D-alanine ligase family. Mg(2+) serves as cofactor. Mn(2+) is required as a cofactor.

Its subcellular location is the cytoplasm. It carries out the reaction 2 D-alanine + ATP = D-alanyl-D-alanine + ADP + phosphate + H(+). It functions in the pathway cell wall biogenesis; peptidoglycan biosynthesis. In terms of biological role, cell wall formation. The protein is D-alanine--D-alanine ligase of Bordetella avium (strain 197N).